The primary structure comprises 402 residues: Queuine tRNA-ribosyltransferase-like protein (402 aa).

It belongs to the queuine tRNA-ribosyltransferase family.

This is Queuine tRNA-ribosyltransferase-like protein from Theileria annulata.